The chain runs to 334 residues: Mitochondrial glycine transporter (334 aa).

Solcar repeat units follow at residues 22–106 (SKTT…LRQG), 135–219 (LSNW…LKRR), and 237–321 (SSSS…LILR). The next 6 membrane-spanning stretches (helical) occupy residues 28-53 (FVAG…TRVQ), 81-107 (GTLP…RQGI), 141-166 (LATG…VRYE), 194-217 (GFGA…EQLK), 241-267 (INFV…KTRL), and 296-314 (GLGL…AWTV).

The protein belongs to the mitochondrial carrier (TC 2.A.29) family. SLC25A38 subfamily.

It is found in the mitochondrion inner membrane. It carries out the reaction glycine(in) = glycine(out). Mitochondrial glycine transporter that imports glycine into the mitochondrial matrix. Plays an important role in providing glycine for the first enzymatic step in heme biosynthesis, the condensation of glycine with succinyl-CoA to produce 5-aminolevulinate (ALA) in the mitochondrial matrix. This Aspergillus clavatus (strain ATCC 1007 / CBS 513.65 / DSM 816 / NCTC 3887 / NRRL 1 / QM 1276 / 107) protein is Mitochondrial glycine transporter.